Consider the following 609-residue polypeptide: Protein FRIGIDA (609 aa).

The segment covering 1-18 has biased composition (low complexity); that stretch reads MSNYPPTVAAQPTTTANP. The disordered stretch occupies residues 1-31; it reads MSNYPPTVAAQPTTTANPLLQRHQSEQRRRE. Coiled coils occupy residues 60–97 and 409–440; these read DELA…LESN and QIKE…LMEE. Disordered regions lie at residues 454 to 488 and 587 to 609; these read RPRL…DDQD and SEER…LDPK. Basic and acidic residues predominate over residues 474 to 484; that stretch reads YRDRSFPSQRD. Residues 594–609 show a composition bias toward polar residues; the sequence is LSNQRSPRSNSSLDPK.

It belongs to the Frigida family. In terms of assembly, homodimer. Component of the transcription activator complex FRI-C composed of FRI, FRL1, SUF4, FLX and FES1. Interacts (via N-terminus) with FRL1 and (via C-terminus) with FLX (via N-terminus), SUF4 (via C-terminus) and FES1 (via C-terminus). Interacts with ASHH2 and RIN1, a component of the SWR1 chromatin-remodeling complex. Interacts with CBP20, FIP1 and FIP2. In terms of tissue distribution, expressed in ovules, but not in stamens.

It is found in the nucleus speckle. Functionally, required for the regulation of flowering time in the late-flowering phenotype. Involved in the enrichment of a WDR5A-containing COMPASS-like complex at the 'FLOWERING LOCUS C' that trimethylates histone H3 'Lys-4', leading to FLC up-regulation and RNA levels increase. Variants with an early-flowering phenotype (Including cv. Columbia, cv. Landsberg Erecta and cv. Wassilewskija) show loss-of-function mutations of FRI. Able to delay flowering independently of FRL1 activity. Dispensable for the reactivation of FLC in early embryogenesis, but required to maintain high levels of FLC expression in later embryonic and vegetative development. Suppresses the repression of FLC by the autonomous pathway, but has no effect on the expression of the genes involved in this pathway. The polypeptide is Protein FRIGIDA (Arabidopsis thaliana (Mouse-ear cress)).